The chain runs to 809 residues: MVTTKMTAAFRNPNRRQVATDKVAEKLSSTLSWVKNTVSHTVSQMASQVASPSASLHTTSSSTTLSTPTQSPSSPSKLSPDDLELLAKLEEQNRLIETDSKSLRSVNGSRRNSGSSLVSSSSASSNLSHLEEDSWILWGRIVNEWDDVRKKKEKQVKELVRKGIPHHFRAIVWQLLCNAQSMTIKDQYSELLKMTSPCEKLIRRDIARTYPEHNFFKEKDSLGQEVLFNVMKAYSLVDRELVTVRAVLSSLDCCCMQMPEEEAFCVFVKLMQDYRLRELFKPSMAELGLCMYQFECMIQEYLPELFVHFQSQSFHTSMYASSWFLTIFLTTFPLPIATRIFDIFMSEGLEIVFRVGLALLQMNQAELMQLDMEGMLQHFQKVIPHQFDGGPEKLIQSAYQVKYNSKKMKKLEKEYTTIKTKEMEEQGEIKRLRTENRLLKQRIETLEKHKCSSTYNEDFVLQLEKELVQARLSEAESQCALKEMQDKVLDIEKKNNSFPDENNIARLQEELIAVKLREAEAIMGLKELRQQVRTLEEHWQRHLARTSGRWKDPPKKNAVNELQDELMSIRLREAETQAEIREMKQRMMEMETQNQINSNQLRRAEQEVNSLQEKVCSLSVKNKGLLAQLSEAKRRQAEIECKNKEEVMAVRLREADSIAAVAELQQHIAELEIQKEEGKLQGQLNRSDSNQYIRELKDQIAELTHELRCLKGQRDFSSRPPFDGIHIVSHLIGDDELFHSSDEDFIDSSLQESAIGFPLHRKSGPMSLNPALADGSESEAEDGMLGPQESDPEAPQKQPPQRESYSTTV.

Residues 1–483 (MVTTKMTAAF…EAESQCALKE (483 aa)) are interaction with alpha-tubulin, gamma-tubulin, BIRC5 and FBXO5. Disordered stretches follow at residues 49 to 80 (VASPSASLHTTSSSTTLSTPTQSPSSPSKLSP) and 99 to 123 (DSKSLRSVNGSRRNSGSSLVSSSSA). The span at 51 to 78 (SPSASLHTTSSSTTLSTPTQSPSSPSKL) shows a compositional bias: low complexity. Serine 102 and serine 113 each carry phosphoserine. Positions 103-123 (LRSVNGSRRNSGSSLVSSSSA) are enriched in low complexity. The tract at residues 128–693 (SHLEEDSWIL…LNRSDSNQYI (566 aa)) is dimerization. One can recognise a Rab-GAP TBC domain in the interval 163 to 348 (GIPHHFRAIV…RIFDIFMSEG (186 aa)). The targeting to the centrosomes stretch occupies residues 377–809 (QHFQKVIPHQ…PQRESYSTTV (433 aa)). Residues 406–717 (KKMKKLEKEY…RCLKGQRDFS (312 aa)) adopt a coiled-coil conformation. Positions 487–809 (KVLDIEKKNN…PQRESYSTTV (323 aa)) are interaction with AURKB and INCENP. Serine 497, serine 689, serine 776, and serine 778 each carry phosphoserine. The segment at 760–809 (HRKSGPMSLNPALADGSESEAEDGMLGPQESDPEAPQKQPPQRESYSTTV) is disordered. Over residues 799-809 (PPQRESYSTTV) the composition is skewed to polar residues.

In terms of assembly, dimeric and monomeric. Interacts with alpha- and gamma-tubulin. Interacts with FBXO5. Interacts with the chromosome passenger complex (CPC) which is at least composed of AURKB/aurora-B, BIRC5/survivin, CDCA8/borealin and INCENP. Post-translationally, probably phosphorylated by PLK1; may be required for degradation during mitosis. Ubiquitinated. Degradation during prophase is ubiquitin-dependent. Widely expressed.

It is found in the nucleus. It localises to the cytoplasm. The protein localises to the cytoskeleton. Its subcellular location is the microtubule organizing center. The protein resides in the centrosome. It is found in the spindle. In terms of biological role, functions as a regulator of cell cycle progression by stabilizing the FBXO5 protein and promoting cyclin-A accumulation during interphase. May play a role in cytokinesis. The sequence is that of Ecotropic viral integration site 5 protein (Evi5) from Mus musculus (Mouse).